Consider the following 109-residue polypeptide: Nascent polypeptide-associated complex protein (109 aa).

The NAC-A/B domain occupies 3 to 69 (PMNPKQLKKL…TEEERVVLKI (67 aa)).

This sequence belongs to the NAC-alpha family. Homodimer. Interacts with the ribosome. Binds ribosomal RNA.

Its function is as follows. Contacts the emerging nascent chain on the ribosome. This is Nascent polypeptide-associated complex protein from Pyrococcus abyssi (strain GE5 / Orsay).